The sequence spans 463 residues: MSLIVTRFAPSPTGYLHIGGLRTAIFNYLFARANQGKFFLRIEDTDLSRNSIEAANAIIEAFKWVGLEYDGEILYQSKRFEIYKEYIQKLLDEDKAYYCYMSKYELDALREEQKARKETPRYDNRYRDFKGTPPKGIEPVVRIKVPQNEVIGFNDGVKGEVRVNTNELDDFIIARSDGVPTYNFVVTIDDALMGITDVIRGDDHLSNTPKQIVLYKALNFKIPNFFHVPMILNEEGQKLSKRHGATNVMDYQERGYLKEALVNFLARLGWSYQDKEIFSMQELLECFDPKDLNSSPSCFSWHKLNWLNAHYLKNQSTQELLKLLKPFSFSDLSHLNPAQLDRLLDALKERSQTLKELALKIDEVLTAPIEYEEKVLKKLNQALVMPLLEKFKLELNTTNFNDESALENAMHQIIEEEKIKAGSFMQPLRLALLGKGGGIGLKEALFILGKTESVKRIEKFLKN.

Residues 10 to 20 carry the 'HIGH' region motif; that stretch reads PSPTGYLHIGG. The 'KMSKS' region motif lies at 238–242; sequence KLSKR. Lysine 241 is an ATP binding site.

Belongs to the class-I aminoacyl-tRNA synthetase family. Glutamate--tRNA ligase type 1 subfamily. In terms of assembly, monomer.

It localises to the cytoplasm. The enzyme catalyses tRNA(Glu) + L-glutamate + ATP = L-glutamyl-tRNA(Glu) + AMP + diphosphate. In terms of biological role, catalyzes the attachment of glutamate to tRNA(Glu) in a two-step reaction: glutamate is first activated by ATP to form Glu-AMP and then transferred to the acceptor end of tRNA(Glu). The polypeptide is Glutamate--tRNA ligase 1 (Helicobacter pylori (strain P12)).